Reading from the N-terminus, the 330-residue chain is N-acetyl-gamma-glutamyl-phosphate reductase (330 aa).

C155 is an active-site residue.

The protein belongs to the NAGSA dehydrogenase family. Type 1 subfamily.

The protein resides in the cytoplasm. It carries out the reaction N-acetyl-L-glutamate 5-semialdehyde + phosphate + NADP(+) = N-acetyl-L-glutamyl 5-phosphate + NADPH + H(+). Its pathway is amino-acid biosynthesis; L-arginine biosynthesis; N(2)-acetyl-L-ornithine from L-glutamate: step 3/4. Its function is as follows. Catalyzes the NADPH-dependent reduction of N-acetyl-5-glutamyl phosphate to yield N-acetyl-L-glutamate 5-semialdehyde. This is N-acetyl-gamma-glutamyl-phosphate reductase from Shewanella halifaxensis (strain HAW-EB4).